Reading from the N-terminus, the 132-residue chain is Pro-MCH 1 (132 aa).

The first 24 residues, 1-24 (MRDSVLSVIFALALFLECYTPSMA), serve as a signal peptide directing secretion. A disulfide bridge connects residues Cys-120 and Cys-129.

Belongs to the MCH family. Pituitary gland. Produced in neurons of lateral basal hypothalamus which project both to the brain and to the neural lobe of the pituitary gland from where MCH is released.

Functionally, plays a role in skin pigmentation by antagonizing the action of melanotropin alpha. Induces melanin concentration within the melanophores. May participate in the control of the hypothalamo-pituitary adrenal gland axis by inhibiting the release of ACTH. The sequence is that of Pro-MCH 1 (mch1) from Oncorhynchus kisutch (Coho salmon).